A 50-amino-acid chain; its full sequence is Nosiheptide precursor (50 aa).

The thiazole-4-carboxylic acid (Ser-Cys) cross-link spans 38–39 (SC). A cross-link (3-hydroxypyridine-2,5-dicarboxylic acid (Ser-Cys) (with S-47)) is located at residues 38–46 (SCTTCECCC). Residues 38 to 47 (SCTTCECCCS) constitute a cross-link (3-hydroxypyridine-2,5-dicarboxylic acid (Ser-Ser) (with C-46)). The segment at residues 41–42 (TC) is a cross-link (thiazole-4-carboxylic acid (Thr-Cys)). A 4-hydroxyglutamate modification is found at glutamate 43. A cross-link (thiazole-4-carboxylic acid (Glu-Cys)) is located at residues 43–44 (EC). Residues 43–45 (ECC) constitute a cross-link (2-(cystein-S-ylcarbonyl)-3-methyl-4-(glutam-5-yloxy)methylindole (Glu-Cys)). Residues 45 to 46 (CC) constitute a cross-link (thiazole-4-carboxylic acid (Cys-Cys)). A cross-link (thiazole-4-carboxylic acid (Ser-Cys)) is located at residues 47–48 (SC). Serine 49 carries the post-translational modification 2,3-didehydroalanine (Ser). Position 49 is a serine amide; atypical (serine 49).

This sequence belongs to the thiocillin family. Post-translationally, the amidation of Ser-49 is produced by the oxidative cleavage of Ser-50 rather than of a glycine, as in eukaryotes.

Functionally, inhibits bacterial protein biosynthesis by binding to ribosomes. Specifically, binds to the complex of 23S rRNA and ribosomal protein L11 (RPLK) in the 50S ribosomal subunit. While allowing a weak binding of elongation factor G (EF-G) to the ribosome and subsequent GTP-hydrolysis, probably impairs conformational changes in both the ribosome and EF-G which are necessary for translocation. In vitro, inhibits Gram-positive bacteria S.aureus strain 209P (MIC=0.0009 ug/ml), S.aureus strain 133 (MIC=0.0019 ug/ml), S.aureus strain B3 (MIC=0.003 ug/ml), S.aureus strain Hb (MIC=0.003 ug/ml), M.citreus strain ATCC 8411 (MIC=0.0038 ug/ml), M.lysodeikticus strain ATCC 4698 (MIC=0.003 ug/ml), S.lutea strain ATCC 9341 (MIC=0.0011 ug/ml), S.faecalis strain ATCC 9790 (MIC=0.0007 ug/ml), S.viridans (MIC=0.0065 ug/ml), S.pyogenes hemolyticus strain Dig7 (MIC=0.00028 ug/ml), D.pneumoniae strain Til (MIC=0.00015 ug/ml), N.catrrhalis (MIC=0.0017 ug/ml), L.casei strain ATCC 6633 (MIC=0.003 ug/ml), B.cereus strain ATCC 6630 (MIC=0.0071 ug/ml) and various isolates of L.monocytogenes. In vitro, inhibits Gram-negative bacterium P.multocida strain A125 (MIC=0.0024 ug/ml) but not M.smegmatis strain ATCC 6630, S.typhimurium, A.aerogenes strain ATCC 8308, P.vulgaris, K.pneumoniae strain ATCC 10031, S.marcescens strain A476, P.aeruginosa strain Bass or B.bronchiseptica strain CN387. Does not inhibit Gram-negative bacterium E.coli strain ATCC 9637 but does inhibit purified ribosomes from E.coli. In vivo, has no systemic effect in mice infected with staphylococci or streptococci when applied orally or subcutaneously. Has a local effect in mice infected subcutaneously or intraperitoneally with staphylococci when applied immediately afterwards. Is not toxic to mice. The sequence is that of Nosiheptide precursor from Streptomyces actuosus.